The following is a 449-amino-acid chain: Xylose isomerase (449 aa).

Catalysis depends on residues His-103 and Asp-106. Mg(2+) is bound by residues Glu-234, Glu-270, His-273, Asp-298, Asp-309, Asp-311, and Asp-342.

The protein belongs to the xylose isomerase family. Homotetramer. It depends on Mg(2+) as a cofactor.

It localises to the cytoplasm. It carries out the reaction alpha-D-xylose = alpha-D-xylulofuranose. The sequence is that of Xylose isomerase from Levilactobacillus brevis (Lactobacillus brevis).